The following is a 429-amino-acid chain: Xyloglucan O-acetyltransferase 1 (429 aa).

Topologically, residues 1–20 (MGSPFKDHHHHHHPFSLAKK) are cytoplasmic. The chain crosses the membrane as a helical; Signal-anchor for type II membrane protein span at residues 21–41 (LIPWTFYAMIPLVLFRLYFYP). Topologically, residues 42–429 (YPLHNITTPI…KWDYESRREE (388 aa)) are lumenal. N-linked (GlcNAc...) asparagine glycosylation is found at Asn46 and Asn89. Intrachain disulfides connect Cys72–Cys122, Cys93–Cys158, Cys102–Cys402, and Cys317–Cys398. A GDS motif motif is present at residues 145-147 (GDS). The active-site Nucleophile is Ser147. 3 N-linked (GlcNAc...) asparagine glycosylation sites follow: Asn189, Asn263, and Asn351. Asp397 acts as the Proton donor in catalysis. The DXXH motif signature appears at 397–400 (DCVH). His400 acts as the Proton acceptor in catalysis.

The protein belongs to the PC-esterase family. TBL subfamily.

The protein resides in the golgi apparatus membrane. In terms of biological role, xyloglucan acetyltransferase that catalyzes the acetylation of fucosylated Gal residues on xyloglucan side chains. Predominantly catalyze 6-O-monoacetylation of Gal residues in the Fuc-Gal-Xyl trisaccharide side chains of xyloglucan oligomers. This chain is Xyloglucan O-acetyltransferase 1, found in Populus trichocarpa (Western balsam poplar).